Consider the following 1119-residue polypeptide: DNA-directed RNA polymerase subunit beta (1119 aa).

Belongs to the RNA polymerase beta chain family. The RNAP catalytic core consists of 2 alpha, 1 beta, 1 beta' and 1 omega subunit. When a sigma factor is associated with the core the holoenzyme is formed, which can initiate transcription.

It catalyses the reaction RNA(n) + a ribonucleoside 5'-triphosphate = RNA(n+1) + diphosphate. Functionally, DNA-dependent RNA polymerase catalyzes the transcription of DNA into RNA using the four ribonucleoside triphosphates as substrates. The polypeptide is DNA-directed RNA polymerase subunit beta (Thermus thermophilus (strain ATCC 27634 / DSM 579 / HB8)).